The sequence spans 783 residues: MSSDWDEIKRLAADFQKAQLTSTLQKLSERNCIEIVTLLLEKQLLDVVFTNDGKEYITPEHLEREIQDELYANGGRANLVEVSKTLNVDLSRIEKLAERIAADDPQIHLMLGQLIDEEYITHIAQEINEKLSQRGEISISDLTSQFDLPSDFLQHQVVEKHLGKLIKGRQDASNPRVFFTQAYIQRCKAKIRGALAAITKPTNVSVILQQISVQEKIFHSLLDEINPAGHVTSKQANAQYVPHIYAKTQADWVNSFYKQNSFLEYDAINKLGISDAKSYIRKQFPNEEFLFLKRVALGARLIELTVVASLNECSATKQYLDLSTILPSNLSEEDIEEAFNAVMAQKHCNPSQFVYLESIVFSQAYLTQLVQPCQEMAQSLAKTAIDNGVYQQYIVEKTLAQKAGNTLGTTHDADEDSKLDKRDERRKKATSGKAGGGSQGRETKTKSTKKHQRGRAAHNHDSDDEEDAVQQSANSSRKSVKSLELVKISDITNLIKGTLEEEGLEHLAKPVASLYLNQLNQMALAKAQELYEAAPQTNRRQTHAAIQERVNTLLVDIRLYEKGLKLFNGDTQTQLVKYLLKSLGNDICNELTLYVAAECSLMVKSTNLNVDQRVKLVQECDAQYRNALLEQNKALNKSIEEFEVATEAVLKACSMIIKKVDKKKDRQLIVGHKEKLLQQLLECQEPALLLHLAALILFTTITGCILHASGKFVSSILQHIRSTLNEPQNALLLRYHDLVLQVLQQTSPDSAESKSVNEQLQALQGEVMDLAQNYSRASVSKAD.

The disordered stretch occupies residues 406-476; the sequence is TLGTTHDADE…DAVQQSANSS (71 aa). The segment covering 446 to 457 has biased composition (basic residues); the sequence is KSTKKHQRGRAA.

The protein belongs to the UFL1 family.

Its function is as follows. E3 UFM1-protein ligase that mediates ufmylation of target proteins. The chain is E3 UFM1-protein ligase 1 homolog from Drosophila grimshawi (Hawaiian fruit fly).